The following is a 123-amino-acid chain: Large ribosomal subunit protein bL17 (123 aa).

It belongs to the bacterial ribosomal protein bL17 family. As to quaternary structure, part of the 50S ribosomal subunit. Contacts protein L32.

This chain is Large ribosomal subunit protein bL17, found in Borreliella burgdorferi (strain ZS7) (Borrelia burgdorferi).